Here is a 101-residue protein sequence, read N- to C-terminus: Large ribosomal subunit protein uL23 (101 aa).

This sequence belongs to the universal ribosomal protein uL23 family. Part of the 50S ribosomal subunit. Contacts protein L29, and trigger factor when it is bound to the ribosome.

Functionally, one of the early assembly proteins it binds 23S rRNA. One of the proteins that surrounds the polypeptide exit tunnel on the outside of the ribosome. Forms the main docking site for trigger factor binding to the ribosome. The polypeptide is Large ribosomal subunit protein uL23 (Corynebacterium jeikeium (strain K411)).